Here is a 496-residue protein sequence, read N- to C-terminus: Pseudooxynicotine dehydrogenase (496 aa).

Positions 1-42 form a signal peptide, tat-type signal; that stretch reads MTKDGDEGSKSGVSRRKFLGSAAVGVATAGIASQLLTLSAPA. FAD is bound by residues alanine 69, glutamate 88, arginine 96, tryptophan 113, valine 285, serine 461, and isoleucine 471.

This sequence belongs to the flavin monoamine oxidase family. In terms of assembly, homodimer. FAD is required as a cofactor. Predicted to be exported by the Tat system. The position of the signal peptide cleavage has not been experimentally proven.

It localises to the periplasm. The enzyme catalyses pseudooxynicotine + 2 Fe(III)-[cytochrome c] + H2O = 4-oxo-4-(pyridin-3-yl)butanal + methylamine + 2 Fe(II)-[cytochrome c] + 2 H(+). It participates in alkaloid degradation; nicotine degradation. With respect to regulation, strongly inhibited by Na(2)MoO(4) and FeCl(3). Activity is nearly twice as high in the presence of Na(2)WO(4). Its function is as follows. Involved in nicotine degradation. Catalyzes the deamination of pseudooxynicotine to 3-succinoylsemialdehyde-pyridine. Functions as a dehydrogenase that uses the c-type cytochrome protein CycN as the physiological electron acceptor. O(2) is a poor electron acceptor. Pnao is oxidized by CycN 230 times faster than O(2) at equivalent oxidant concentrations. This Pseudomonas putida (strain DSM 28022 / S16) protein is Pseudooxynicotine dehydrogenase.